The sequence spans 212 residues: Large ribosomal subunit protein uL3 (212 aa).

The segment at 134-155 (RNSHGNSLSHRAPGSIGQNQSP) is disordered. Position 153 is an N5-methylglutamine (Gln-153).

This sequence belongs to the universal ribosomal protein uL3 family. As to quaternary structure, part of the 50S ribosomal subunit. Forms a cluster with proteins L14 and L19. Post-translationally, methylated by PrmB.

Its function is as follows. One of the primary rRNA binding proteins, it binds directly near the 3'-end of the 23S rRNA, where it nucleates assembly of the 50S subunit. This is Large ribosomal subunit protein uL3 from Pseudoalteromonas atlantica (strain T6c / ATCC BAA-1087).